The sequence spans 1378 residues: Tonsoku-like protein (1378 aa).

TPR repeat units follow at residues 27-60 (AALCHQLGELLAGHGRYAEALEQHWQELQLRERA), 67-100 (AVAHRKIGERLAEMEDYPAALQHQHQYLELAHSL), 107-147 (QRAW…VDEE), 162-195 (TRLYLNLGLTFESLQQTALCNDYFRKSIFLAEQN), 202-235 (FRARYNLGTIHWRAGQHSQAMRCLEGARECAHTM), 242-275 (SECCVVIAQVLQDLGDFLAAKRALKKAYRLGSQK), 311-344 (MVICEQLGDLFSKAGDFPRAAEAYQKQLRFAELL), and 352-385 (AIIHVSLATTLGDMKDHHGAVRHYEEELRLRSGN). The segment at 475–524 (AATAESEALEAGEVELSEGEDDTDGLTPQLEEDEELQGHLGRRKGSKWNR) is disordered. Residues 481 to 509 (EALEAGEVELSEGEDDTDGLTPQLEEDEE) are compositionally biased toward acidic residues. Positions 514–523 (LGRRKGSKWN) are enriched in basic residues. 3 ANK repeats span residues 528 to 557 (MGETLLHRACIEGQLRRVQDLVRQGHPLNP), 561 to 590 (CGWTPLHEACNYGHLEIVRFLLDHGAAVDD), and 597 to 626 (EGITPLHDALNCGHFEVAELLLERGASVTL). Residues 667-789 (AASGQDPHSS…REAATASTSR (123 aa)) are disordered. Positions 672-684 (DPHSSQAFHTPSS) are enriched in polar residues. The span at 691-702 (TSPPLSPCPEPP) shows a compositional bias: pro residues. S719 carries the post-translational modification Phosphoserine. 2 stretches are compositionally biased toward low complexity: residues 736–753 (GPASSSSSSEGEDSAGPA) and 777–789 (ASNREAATASTSR). Residue R797 is modified to Omega-N-methylarginine. The tract at residues 842-933 (LTRSRRPRPR…PLGPAPPPPI (92 aa)) is disordered. Polar residues-rich tracts occupy residues 883–899 (CMQSCSAPVNAGPSSLA) and 907–918 (STPRVSEPSGDS). 7 LRR repeats span residues 1069–1093 (HTALRELRLAGNRLGDKCVAELVAA), 1097–1122 (MPSLALLDLSSNHLGPEGLRQLAMGL), 1128–1151 (LQSLEELDLSMNPLGDGCGQSLAS), 1188–1212 (AEHLKTLSLSYNALGAPALARTLQS), 1247–1270 (GCALAHLTLSANHLGDKAVRDLCR), 1275–1300 (CPSLISLDLSANPEISCASLEELLST), and 1331–1354 (AAQLRELQLCSRRLCAEDRDALRQ).

Belongs to the Tonsoku family. Component of the MMS22L-TONSL complex, a complex at least composed of MMS22L and TONSL/NFKBIL2. Interacts with the MCM complex, the FACT complex and the RPA complex. Interacts with MCM5; the interaction is direct. Binds histones, with a strong preference for histone H3.1 (histones H3.1 and H3-4/H3.1t). Interacts (via ANK repeats) with histone H4; specifically binds histone H4 lacking methylation at 'Lys-20' (H4K20me0). May interact with DNAJC9; the interaction seems to be histone-dependent. In terms of tissue distribution, expressed in heart, skeletal muscle and tracheal epithelial cells.

The protein localises to the nucleus. Its subcellular location is the chromosome. The protein resides in the cytoplasm. Component of the MMS22L-TONSL complex, a complex that promotes homologous recombination-mediated repair of double-strand breaks (DSBs) at stalled or collapsed replication forks. The MMS22L-TONSL complex is required to maintain genome integrity during DNA replication. It mediates the assembly of RAD51 filaments on single-stranded DNA (ssDNA): the MMS22L-TONSL complex is recruited to DSBs following histone replacement by histone chaperones and eviction of the replication protein A complex (RPA/RP-A) from DSBs. Following recruitment to DSBs, the TONSL-MMS22L complex promotes recruitment of RAD51 filaments and subsequent homologous recombination. Within the complex, TONSL acts as a histone reader, which recognizes and binds newly synthesized histones following their replacement by histone chaperones. Specifically binds histone H4 lacking methylation at 'Lys-20' (H4K20me0) and histone H3.1. This Homo sapiens (Human) protein is Tonsoku-like protein.